The chain runs to 112 residues: Protein BEX5 (112 aa).

Basic and acidic residues-rich tracts occupy residues 1-12 and 30-51; these read MEKDPKERREEE and PKPR…REDM. The tract at residues 1-56 is disordered; sequence MEKDPKERREEEQAPVQNEEACPMGGGEGPKPRENVRGDWDPPAQDFREDMPNGLV. The tract at residues 101–105 is his cluster; it reads HHDHH. Cysteine 109 lines the Zn(2+) pocket.

This sequence belongs to the BEX family. Post-translationally, ubiquitinated. Degraded by the proteasome.

The protein resides in the cytoplasm. The chain is Protein BEX5 (BEX5) from Bos taurus (Bovine).